The primary structure comprises 114 residues: Probable non-functional T cell receptor beta variable 5-3 (114 aa).

Residues 1-21 (MGPGLLCWELLYLLGAGPVEA) form the signal peptide. One can recognise an Ig-like domain in the interval 22-114 (GVTQSPTHLI…SALYLCARSL (93 aa)). A disulfide bond links Cys42 and Cys110. An N-linked (GlcNAc...) asparagine glycan is attached at Asn96.

Alpha-beta TR is a heterodimer composed of an alpha and beta chain; disulfide-linked. The alpha-beta TR is associated with the transmembrane signaling CD3 coreceptor proteins to form the TR-CD3 (TcR or TCR). The assembly of alpha-beta TR heterodimers with CD3 occurs in the endoplasmic reticulum where a single alpha-beta TR heterodimer associates with one CD3D-CD3E heterodimer, one CD3G-CD3E heterodimer and one CD247 homodimer forming a stable octameric structure. CD3D-CD3E and CD3G-CD3E heterodimers preferentially associate with TR alpha and TR beta chains, respectively. The association of the CD247 homodimer is the last step of TcR assembly in the endoplasmic reticulum and is required for transport to the cell surface.

The protein localises to the cell membrane. Its function is as follows. Probable non-functional open reading frame (ORF) of V region of the variable domain of T cell receptor (TR) beta chain. Non-functional ORF generally cannot participate in the synthesis of a productive T cell receptor (TR) chain due to altered V-(D)-J or switch recombination and/or splicing site (at mRNA level) and/or conserved amino acid change (protein level). Alpha-beta T cell receptors are antigen specific receptors which are essential to the immune response and are present on the cell surface of T lymphocytes. Recognize peptide-major histocompatibility (MH) (pMH) complexes that are displayed by antigen presenting cells (APC), a prerequisite for efficient T cell adaptive immunity against pathogens. Binding of alpha-beta TR to pMH complex initiates TR-CD3 clustering on the cell surface and intracellular activation of LCK that phosphorylates the ITAM motifs of CD3G, CD3D, CD3E and CD247 enabling the recruitment of ZAP70. In turn ZAP70 phosphorylates LAT, which recruits numerous signaling molecules to form the LAT signalosome. The LAT signalosome propagates signal branching to three major signaling pathways, the calcium, the mitogen-activated protein kinase (MAPK) kinase and the nuclear factor NF-kappa-B (NF-kB) pathways, leading to the mobilization of transcription factors that are critical for gene expression and essential for T cell growth and differentiation. The T cell repertoire is generated in the thymus, by V-(D)-J rearrangement. This repertoire is then shaped by intrathymic selection events to generate a peripheral T cell pool of self-MH restricted, non-autoaggressive T cells. Post-thymic interaction of alpha-beta TR with the pMH complexes shapes TR structural and functional avidity. This chain is Probable non-functional T cell receptor beta variable 5-3, found in Homo sapiens (Human).